The chain runs to 414 residues: Patatin-like protein 1 (414 aa).

The PNPLA domain occupies 22-228 (LSLDGGGVRG…TANNPTLVAM (207 aa)). The GXGXXG signature appears at 26-31 (GGGVRG). The GXSXG motif lies at 64–68 (GTSTG). The Nucleophile role is filled by Ser-66. The active-site Proton acceptor is Asp-215. The short motif at 215-217 (DGA) is the DGA/G element. Ser-399 carries the phosphoserine modification.

Belongs to the patatin family. Post-translationally, phosphorylated at Ser-399 by CPK3. Phosphorylation enhances PLP1 activity towards phosphatidylcholine. Expressed specifically in roots and root hairs.

It is found in the cytoplasm. Possesses non-specific lipolytic acyl hydrolase (LAH) activity. Catalyzes the hydrolysis of the neutral lipids monogalactosyldiacylglycerol (MGDG), digalactosyldiacylglycerol (DGDG) and phosphatidylglycerol (PG), and less efficiently the polar lipids phosphatidylcholine (PC) and phosphatidylinositol (PI), but not the storage lipid triacylglycerol (TAG). May play a role in root development. This chain is Patatin-like protein 1 (PLP1), found in Arabidopsis thaliana (Mouse-ear cress).